The following is a 778-amino-acid chain: DEK domain-containing chromatin-associated protein 4 (778 aa).

Disordered stretches follow at residues 1-334 (MGEE…RPVR) and 475-689 (LVNE…PSDE). Residues 14-26 (ANGTSSLQKTSDA) show a composition bias toward polar residues. Basic and acidic residues-rich tracts occupy residues 40–95 (EVQE…PEAD), 121–153 (AVMKESVESADNKDAENPEGEQEKESKEEKLEG), 165–185 (EEKLVGGDKGDDVDEAEKVEN), and 209–243 (TNKGEEVKEANKEDDVEADTKVAEPEVEDKKTESK). Residues 191–300 (KEEALKEKNE…KEDIKKSNKR (110 aa)) are a coiled coil. Residues 244-286 (DENEDKEEEKEDEKEESMDDKEDEKEESNDDDKEDEKEESNDD) show a composition bias toward acidic residues. Basic and acidic residues-rich tracts occupy residues 287–296 (KEDKKEDIKK) and 303–323 (GKTEKTRGKTKSDEEKKDIEP). Positions 289-296 (DKKEDIKK) match the Nuclear localization signal 1 motif. A Nuclear localization signal 2 motif is present at residues 489-496 (PKKSSPAA). Low complexity predominate over residues 491-502 (KSSPAAGSSSSK). Residues 526–587 (DDESEEEKED…EESEEETKKK (62 aa)) are a coiled coil. 2 stretches are compositionally biased toward acidic residues: residues 527–553 (DESEEEKEDDEEEEKEQEVEEEEEENE) and 560–582 (SEDEAPQLSESEENVESEEESEE). The Nuclear localization signal 3 motif lies at 618 to 625 (PKKATQKR). Positions 621 to 631 (ATQKRSAGKRK) are enriched in basic residues. The span at 678–689 (KGKDKNKEPSDE) shows a compositional bias: basic and acidic residues. The 56-residue stretch at 685–740 (EPSDEELKTAIIDILKGVDFNTATFTDILKRLDAKFNISLASKKSSIKRMIQDELT) folds into the DEK-C domain. DNA-binding regions lie at residues 703-717 (DFNTATFTDILKRLD) and 732-736 (KRMIQ). Residues 732–766 (KRMIQDELTKLADEAEDEEGEEEDAEHEEEEEKEK) are a coiled coil. The interval 741-778 (KLADEAEDEEGEEEDAEHEEEEEKEKAKGSGGGEEVKA) is disordered. A compositionally biased stretch (acidic residues) spans 745–763 (EAEDEEGEEEDAEHEEEEE). Residues 764-778 (KEKAKGSGGGEEVKA) show a composition bias toward basic and acidic residues.

In terms of assembly, interacts with DEK3.

It localises to the nucleus. The protein localises to the nucleolus. In terms of biological role, chromatin-associated protein which contributes to the modulation of chromatin structure (such as super-helical structure of DNA) and function. Binds to chromatin of protein-coding genes throughout the genome to regulate nucleosome occupancy and chromatin accessibility, and to modulate the expression of target genes. In Arabidopsis thaliana (Mouse-ear cress), this protein is DEK domain-containing chromatin-associated protein 4.